An 85-amino-acid polypeptide reads, in one-letter code: Small ribosomal subunit protein bS16 (85 aa).

It belongs to the bacterial ribosomal protein bS16 family.

In Nitrosomonas eutropha (strain DSM 101675 / C91 / Nm57), this protein is Small ribosomal subunit protein bS16.